The sequence spans 1574 residues: Sterol 3-beta-glucosyltransferase (1574 aa).

The span at 37–48 (TFLNQNPASPNN) shows a compositional bias: polar residues. Disordered regions lie at residues 37–61 (TFLN…NKDE) and 102–170 (ASNA…HSKL). 2 stretches are compositionally biased toward basic and acidic residues: residues 107–121 (EAKD…RSSR) and 128–138 (PEYRREYKLDY). Over residues 139–148 (DIDESEEDDI) the composition is skewed to acidic residues. The segment covering 149–170 (ESTRDENTLKPKTEDTSVHSKL) has biased composition (basic and acidic residues). The region spanning 253-288 (DKLKRVFELNDDDYFYGNYNVWLVRDVLLQGHIYLT) is the GRAM 1 domain. The region spanning 323-471 (DVIQSGSLGM…WVNNIVKVVF (149 aa)) is the PH domain. Disordered regions lie at residues 389-413 (GRND…SGDE), 538-559 (RMKK…GNEP), 651-722 (ASHR…PVQG), and 774-806 (DALS…KKKN). Residues 692–701 (ITPSKIFSNK) show a composition bias toward polar residues. Basic and acidic residues predominate over residues 702-711 (SRTESEKSTP). Positions 712–722 (DRSQTTSPVQG) are enriched in polar residues. The region spanning 854-920 (RHFQERFSFN…IDVDTCSKEK (67 aa)) is the GRAM 2 domain. Over residues 964 to 976 (RESGNESSDDNKS) the composition is skewed to basic and acidic residues. A disordered region spans residues 964–996 (RESGNESSDDNKSAQHGKSGCFQKTPSSAETTK). The span at 985-996 (FQKTPSSAETTK) shows a compositional bias: polar residues. Positions 1057, 1058, 1060, 1333, 1364, 1366, 1379, 1382, 1383, 1384, 1403, and 1404 each coordinate UDP-alpha-D-glucose. Residues 1505 to 1574 (DSDTYDADHD…DNTTVTDANK (70 aa)) are disordered. Residues 1510-1533 (DADHDSDKESDHDQTYEQDNHSDY) are compositionally biased toward basic and acidic residues. The span at 1563–1574 (GNDNTTVTDANK) shows a compositional bias: polar residues.

Belongs to the glycosyltransferase 28 family.

Its subcellular location is the cytoplasm. It localises to the membrane. The catalysed reaction is a sterol + UDP-alpha-D-glucose = a sterol 3-beta-D-glucoside + UDP + H(+). The enzyme catalyses ergosterol + UDP-alpha-D-glucose = ergosteryl 3-beta-D-glucoside + UDP + H(+). Functionally, sterol glycosyltransferase responsible for the glycosylation of ergosterol to form ergosterol-glucoside. The protein is Sterol 3-beta-glucosyltransferase of Debaryomyces hansenii (strain ATCC 36239 / CBS 767 / BCRC 21394 / JCM 1990 / NBRC 0083 / IGC 2968) (Yeast).